The following is a 788-amino-acid chain: Protein translocase subunit SecA 2 (788 aa).

Residues Q86, 104 to 108 (GEGKT), and D493 contribute to the ATP site.

Belongs to the SecA family. As to quaternary structure, monomer and homodimer. Part of the essential Sec protein translocation apparatus which comprises SecA, SecYEG and auxiliary proteins SecDF. Other proteins may also be involved.

It is found in the cell membrane. The protein localises to the cytoplasm. It catalyses the reaction ATP + H2O + cellular proteinSide 1 = ADP + phosphate + cellular proteinSide 2.. Part of the Sec protein translocase complex. Interacts with the SecYEG preprotein conducting channel. Has a central role in coupling the hydrolysis of ATP to the transfer of proteins into and across the cell membrane, serving as an ATP-driven molecular motor driving the stepwise translocation of polypeptide chains across the membrane. This chain is Protein translocase subunit SecA 2, found in Bacillus thuringiensis (strain Al Hakam).